The chain runs to 197 residues: 3-isopropylmalate dehydratase small subunit (197 aa).

This sequence belongs to the LeuD family. LeuD type 1 subfamily. In terms of assembly, heterodimer of LeuC and LeuD.

It carries out the reaction (2R,3S)-3-isopropylmalate = (2S)-2-isopropylmalate. It functions in the pathway amino-acid biosynthesis; L-leucine biosynthesis; L-leucine from 3-methyl-2-oxobutanoate: step 2/4. Functionally, catalyzes the isomerization between 2-isopropylmalate and 3-isopropylmalate, via the formation of 2-isopropylmaleate. The polypeptide is 3-isopropylmalate dehydratase small subunit (Mycobacterium sp. (strain JLS)).